Reading from the N-terminus, the 213-residue chain is Ras-related protein Rab-4B (213 aa).

Alanine 2 carries the N-acetylalanine modification. GDP-binding residues include glycine 18, threonine 19, glycine 20, lysine 21, serine 22, and cysteine 23. Residues glycine 18, threonine 19, glycine 20, lysine 21, serine 22, cysteine 23, serine 37, histidine 39, and threonine 40 each contribute to the GTP site. Serine 22 contacts Mg(2+). Residues 39–44 carry the Switch 1 motif; that stretch reads HTIGVE. Mg(2+) is bound by residues threonine 40 and aspartate 63. Positions 65-74 match the Switch 2 motif; that stretch reads AGQERFRSVT. A GTP-binding site is contributed by glycine 66. Residue glutamine 67 is modified to 5-glutamyl serotonin. GDP is bound by residues asparagine 121, lysine 122, aspartate 124, alanine 152, and leucine 153. Residues asparagine 121, lysine 122, aspartate 124, alanine 152, and leucine 153 each coordinate GTP. Residues serine 185 and serine 193 each carry the phosphoserine modification. S-geranylgeranyl cysteine attachment occurs at residues cysteine 211 and cysteine 213. Cysteine 213 bears the Cysteine methyl ester mark.

Belongs to the small GTPase superfamily. Rab family. In terms of assembly, interacts (GTP-bound form) with RUFY1; the interaction allows endosomal tethering and fusion. Mg(2+) is required as a cofactor. Post-translationally, serotonylation of Gln-67 by TGM2 during activation and aggregation of platelets leads to constitutive activation of GTPase activity.

The protein localises to the cell membrane. Its subcellular location is the early endosome membrane. It catalyses the reaction GTP + H2O = GDP + phosphate + H(+). With respect to regulation, regulated by guanine nucleotide exchange factors (GEFs) which promote the exchange of bound GDP for free GTP. Regulated by GTPase activating proteins (GAPs) which increase the GTP hydrolysis activity. Inhibited by GDP dissociation inhibitors (GDIs). The small GTPases Rab are key regulators of intracellular membrane trafficking, from the formation of transport vesicles to their fusion with membranes. Rabs cycle between an inactive GDP-bound form and an active GTP-bound form that is able to recruit to membranes different set of downstream effectors directly responsible for vesicle formation, movement, tethering and fusion. RAB4B mediates endosomal tethering and fusion through the interaction with RUFY1 and RAB14. Acts as a regulator of platelet alpha-granule release during activation and aggregation of platelets. This is Ras-related protein Rab-4B from Homo sapiens (Human).